Reading from the N-terminus, the 174-residue chain is NADH-quinone oxidoreductase subunit I (174 aa).

2 4Fe-4S ferredoxin-type domains span residues 44–74 (LNRYPDGLEKCIGCELCAWACPADAIYVEGD) and 90–119 (RVYQINYLRCIGCGLCIEACPTRALTMTND). Positions 54, 57, 60, 64, 99, 102, 105, and 109 each coordinate [4Fe-4S] cluster.

Belongs to the complex I 23 kDa subunit family. As to quaternary structure, NDH-1 is composed of 14 different subunits. Subunits NuoA, H, J, K, L, M, N constitute the membrane sector of the complex. The cofactor is [4Fe-4S] cluster.

The protein localises to the cell membrane. The catalysed reaction is a quinone + NADH + 5 H(+)(in) = a quinol + NAD(+) + 4 H(+)(out). Its function is as follows. NDH-1 shuttles electrons from NADH, via FMN and iron-sulfur (Fe-S) centers, to quinones in the respiratory chain. The immediate electron acceptor for the enzyme in this species is believed to be menaquinone. Couples the redox reaction to proton translocation (for every two electrons transferred, four hydrogen ions are translocated across the cytoplasmic membrane), and thus conserves the redox energy in a proton gradient. This chain is NADH-quinone oxidoreductase subunit I, found in Mycobacterium sp. (strain KMS).